Reading from the N-terminus, the 224-residue chain is Claudin-19 (224 aa).

Residues 1–7 (MANSGLQ) are Cytoplasmic-facing. The helical transmembrane segment at 8-28 (LLGYFLALGGWVGIIASTALP) threads the bilayer. The Extracellular portion of the chain corresponds to 29–81 (QWKQSSYAGDAIITAVGLYEGLWMSCASQSTGQVQCKLYDSLLALDGHIQSAR). Cys-54 and Cys-64 are disulfide-bonded. A helical transmembrane segment spans residues 82 to 102 (ALMVVAVLLGFVAMVLSVVGM). Over 103 to 117 (KCTRVGDSNPIAKGR) the chain is Cytoplasmic. A helical membrane pass occupies residues 118–138 (VAIAGGALFILAGLCTLTAVS). Residues 139 to 160 (WYATLVTQEFFNPSTPVNARYE) are Extracellular-facing. Residues 161-181 (FGPALFVGWASAGLAVLGGSF) form a helical membrane-spanning segment. Topologically, residues 182–224 (LCCTCPEPERPNSSPQPYRPGPSAAAREPVVKLPASAKGPLGV) are cytoplasmic. Positions 191–224 (RPNSSPQPYRPGPSAAAREPVVKLPASAKGPLGV) are disordered.

This sequence belongs to the claudin family. Can form homo- and heteropolymeric tight junction strands. Interacts with other claudins including CLDN3, CLDN10, CLDN16 and CLDN18 with highest affinity for CLDN16. Interacts (via PDZ-binding motif TRV) with TJP1 (via PDZ domain).

The protein localises to the cell junction. It is found in the tight junction. Its subcellular location is the cell membrane. The enzyme catalyses Mg(2+)(in) = Mg(2+)(out). The catalysed reaction is Ca(2+)(in) = Ca(2+)(out). It carries out the reaction Na(+)(in) = Na(+)(out). It catalyses the reaction K(+)(in) = K(+)(out). The enzyme catalyses Rb(+)(in) = Rb(+)(out). The catalysed reaction is Cs(+)(in) = Cs(+)(out). It carries out the reaction Li(+)(in) = Li(+)(out). Forms paracellular channels: coassembles with CLDN16 into tight junction strands with cation-selective channels through the strands, conveying epithelial permeability in a process known as paracellular tight junction permeability. Involved in the maintenance of ion gradients along the nephron. In the thick ascending limb (TAL) of Henle's loop, facilitates sodium paracellular permeability from the interstitial compartment to the lumen, contributing to the lumen-positive transepithelial potential that drives paracellular magnesium and calcium reabsorption. Forms paracellular barriers on its own. In the peripheral nervous system, represents a major constituent of the tight junctions in Schwann cells and contributes to electrical sealing. During retinal neurogenesis, may regulate the barrier properties of tight junctions in retinal pigment epithelium, required for proper retinal tissue differentiation and vision. This is Claudin-19 from Homo sapiens (Human).